We begin with the raw amino-acid sequence, 149 residues long: UPF0208 membrane protein VFMJ11_0876 (149 aa).

The next 2 helical transmembrane spans lie at 41 to 61 and 69 to 89; these read FAVK…MVFN and AIII…WLGN.

This sequence belongs to the UPF0208 family.

Its subcellular location is the cell inner membrane. This chain is UPF0208 membrane protein VFMJ11_0876, found in Aliivibrio fischeri (strain MJ11) (Vibrio fischeri).